A 422-amino-acid chain; its full sequence is Protein phosphatase methylesterase 1 (422 aa).

Positions 1–27 (MSDMFRKSVLNKLPHLPPTRAPWADES) are disordered. Active-site residues include serine 207, aspartate 234, and histidine 371.

This sequence belongs to the AB hydrolase superfamily.

It catalyses the reaction [phosphatase 2A protein]-C-terminal L-leucine methyl ester + H2O = [phosphatase 2A protein]-C-terminal L-leucine + methanol + H(+). Demethylates proteins that have been reversibly carboxymethylated. Demethylates the phosphatase PP2A catalytic subunit. In Cryptococcus neoformans var. neoformans serotype D (strain JEC21 / ATCC MYA-565) (Filobasidiella neoformans), this protein is Protein phosphatase methylesterase 1 (PPE1).